Here is a 335-residue protein sequence, read N- to C-terminus: MKLIDSYAVLEKIRDLIYSLLEARDRAMENGLEVIPVRTATPLVRYGFISMLKGGVVMDVTNEQQAEIAEDAGAVGVMVLDKLPYDVRKAGGVARTADLNVIRAVMETITIPVSAKCRIGHYWEAKLLEEIGVDLIDESEVLTPTDEKAHIWKWEFRVPFVNGARSLPEALRRIWEGASMIRTKGEAGTGNVAEAVRHMKAVNRDIAVLRGYYKAGDIEAIRLYAKSNNVPFELALLTARLGRLPVVNFAAGGIATPADAALMMWLGADGVFVGSGIFKSRDPEQRAQAIVLATTYWDDPETVAEAQSMVSERNAMPGIDITRLKPEELLQIRGE.

D59 provides a ligand contact to D-ribose 5-phosphate. Residue K116 is the Schiff-base intermediate with D-ribose 5-phosphate of the active site. Residue G188 coordinates D-ribose 5-phosphate. Residue K200 coordinates D-glyceraldehyde 3-phosphate. D-ribose 5-phosphate contacts are provided by residues G253 and 274 to 275 (GS).

This sequence belongs to the PdxS/SNZ family. In terms of assembly, in the presence of PdxT, forms a dodecamer of heterodimers.

It carries out the reaction aldehydo-D-ribose 5-phosphate + D-glyceraldehyde 3-phosphate + L-glutamine = pyridoxal 5'-phosphate + L-glutamate + phosphate + 3 H2O + H(+). The protein operates within cofactor biosynthesis; pyridoxal 5'-phosphate biosynthesis. Functionally, catalyzes the formation of pyridoxal 5'-phosphate from ribose 5-phosphate (RBP), glyceraldehyde 3-phosphate (G3P) and ammonia. The ammonia is provided by the PdxT subunit. Can also use ribulose 5-phosphate and dihydroxyacetone phosphate as substrates, resulting from enzyme-catalyzed isomerization of RBP and G3P, respectively. The sequence is that of Pyridoxal 5'-phosphate synthase subunit PdxS from Hyperthermus butylicus (strain DSM 5456 / JCM 9403 / PLM1-5).